A 151-amino-acid chain; its full sequence is Small ribosomal subunit protein uS15 (151 aa).

K27 is modified (N6-acetyllysine; alternate). The residue at position 27 (K27) is an N6-succinyllysine; alternate. K27 is covalently cross-linked (Glycyl lysine isopeptide (Lys-Gly) (interchain with G-Cter in ubiquitin)). S30 carries the post-translational modification Phosphoserine. K34 bears the N6-succinyllysine mark. Phosphotyrosine is present on Y38. K43 participates in a covalent cross-link: Glycyl lysine isopeptide (Lys-Gly) (interchain with G-Cter in SUMO2).

The protein belongs to the universal ribosomal protein uS15 family. Component of the small ribosomal subunit. Part of the small subunit (SSU) processome, composed of more than 70 proteins and the RNA chaperone small nucleolar RNA (snoRNA) U3. Ubiquitinated at Lys-27 by RNF14 and RNF25 in response to ribosome collisions (ribosome stalling).

It localises to the cytoplasm. The protein localises to the nucleus. Its subcellular location is the nucleolus. Its function is as follows. Component of the small ribosomal subunit. The ribosome is a large ribonucleoprotein complex responsible for the synthesis of proteins in the cell. Part of the small subunit (SSU) processome, first precursor of the small eukaryotic ribosomal subunit. During the assembly of the SSU processome in the nucleolus, many ribosome biogenesis factors, an RNA chaperone and ribosomal proteins associate with the nascent pre-rRNA and work in concert to generate RNA folding, modifications, rearrangements and cleavage as well as targeted degradation of pre-ribosomal RNA by the RNA exosome. This chain is Small ribosomal subunit protein uS15, found in Homo sapiens (Human).